Reading from the N-terminus, the 102-residue chain is MPAIPLEHGLAVAGILFCLGLVGLMVRRNILFVLMSLEIMMNAAALAFIVAGARWGQPDGQVMFILVISLAAAEASIGLAILLQLYRRFHTLDIDAASEMRG.

The next 3 membrane-spanning stretches (helical) occupy residues leucine 6 to valine 26, isoleucine 30 to valine 50, and valine 62 to leucine 82.

The protein belongs to the complex I subunit 4L family. In terms of assembly, NDH-1 is composed of 13 different subunits. Subunits NuoA, H, J, K, L, M, N constitute the membrane sector of the complex.

The protein resides in the cell inner membrane. The enzyme catalyses a quinone + NADH + 5 H(+)(in) = a quinol + NAD(+) + 4 H(+)(out). Its function is as follows. NDH-1 shuttles electrons from NADH, via FMN and iron-sulfur (Fe-S) centers, to quinones in the respiratory chain. The immediate electron acceptor for the enzyme in this species is believed to be ubiquinone. Couples the redox reaction to proton translocation (for every two electrons transferred, four hydrogen ions are translocated across the cytoplasmic membrane), and thus conserves the redox energy in a proton gradient. The chain is NADH-quinone oxidoreductase subunit K from Pseudomonas fluorescens (strain SBW25).